Consider the following 69-residue polypeptide: Large ribosomal subunit protein uL29 (69 aa).

It belongs to the universal ribosomal protein uL29 family.

This Rhodopseudomonas palustris (strain BisB5) protein is Large ribosomal subunit protein uL29.